A 129-amino-acid polypeptide reads, in one-letter code: Small ribosomal subunit protein uS11 (129 aa).

It belongs to the universal ribosomal protein uS11 family. In terms of assembly, part of the 30S ribosomal subunit. Interacts with proteins S7 and S18. Binds to IF-3.

Its function is as follows. Located on the platform of the 30S subunit, it bridges several disparate RNA helices of the 16S rRNA. Forms part of the Shine-Dalgarno cleft in the 70S ribosome. The polypeptide is Small ribosomal subunit protein uS11 (Rhodopseudomonas palustris (strain HaA2)).